The primary structure comprises 242 residues: Protein HTATIP2 (242 aa).

N-acetylalanine is present on A2. The segment at 2–25 (AETEALSKLREDFRMQNKSVFILG) is required for interaction with elongation factor EEF1A1. The NADPH site is built by S27, G28, E29, T30, R52, R53, L92, G93, Y143, K147, L170, and R178. Y143 (proton acceptor) is an active-site residue. Residue K147 is part of the active site.

Monomer. Forms homodimers during oxidative stress. Interacts (via N-terminus) with elongation factor EEF1A1 (via middle-region); the interaction is direct and competes with EEF1A1 binding to guanyl-nucleotide exchange factor EEF1B2, thereby inhibiting GDP for GTP exchange and reactivation of EEF1A1. Interacts with nuclear transport receptors XPO4, IPO5/RANBP5, IPO7, IPO9 and KPNB1 as well as GCN1L1/GCN1 and LRPPRC probably through their HEAT repeats. Binds NCOA5/CIA.

The protein resides in the cytoplasm. Functionally, represses translation by preventing reactivation of elongation factor eEF1A. May also inhibit nuclear import by competing with nuclear import substrates for binding to a subset of nuclear transport receptors. Has additionally been proposed to act as a redox sensor involved in cellular oxidative stress surveillance. The chain is Protein HTATIP2 (HTATIP2) from Gorilla gorilla gorilla (Western lowland gorilla).